Reading from the N-terminus, the 282-residue chain is NADPH-dependent 7-cyano-7-deazaguanine reductase (282 aa).

Isoleucine 88 to serine 90 serves as a coordination point for substrate. Serine 90–lysine 91 is a binding site for NADPH. Residue cysteine 190 is the Thioimide intermediate of the active site. The Proton donor role is filled by aspartate 197. Histidine 229–glutamate 230 is a substrate binding site. Arginine 258–glycine 259 provides a ligand contact to NADPH.

Belongs to the GTP cyclohydrolase I family. QueF type 2 subfamily. As to quaternary structure, homodimer.

Its subcellular location is the cytoplasm. It catalyses the reaction 7-aminomethyl-7-carbaguanine + 2 NADP(+) = 7-cyano-7-deazaguanine + 2 NADPH + 3 H(+). The protein operates within tRNA modification; tRNA-queuosine biosynthesis. Functionally, catalyzes the NADPH-dependent reduction of 7-cyano-7-deazaguanine (preQ0) to 7-aminomethyl-7-deazaguanine (preQ1). This is NADPH-dependent 7-cyano-7-deazaguanine reductase from Escherichia coli O81 (strain ED1a).